The primary structure comprises 175 residues: RNA pyrophosphohydrolase (175 aa).

Positions 6–150 (GFRPNVGIVI…KREVYRRVMK (145 aa)) constitute a Nudix hydrolase domain. The short motif at 38 to 59 (GGVDDGETPEQAMYRELYEEIG) is the Nudix box element.

The protein belongs to the Nudix hydrolase family. RppH subfamily. The cofactor is a divalent metal cation.

Functionally, accelerates the degradation of transcripts by removing pyrophosphate from the 5'-end of triphosphorylated RNA, leading to a more labile monophosphorylated state that can stimulate subsequent ribonuclease cleavage. This Aeromonas hydrophila subsp. hydrophila (strain ATCC 7966 / DSM 30187 / BCRC 13018 / CCUG 14551 / JCM 1027 / KCTC 2358 / NCIMB 9240 / NCTC 8049) protein is RNA pyrophosphohydrolase.